A 480-amino-acid polypeptide reads, in one-letter code: tRNA-2-methylthio-N(6)-dimethylallyladenosine synthase (480 aa).

Positions 32 to 149 (RKLYIRTFGC…LPELIRRRRA (118 aa)) constitute an MTTase N-terminal domain. Residues Cys-41, Cys-78, Cys-112, Cys-186, Cys-190, and Cys-193 each coordinate [4Fe-4S] cluster. The Radical SAM core domain maps to 172–405 (RIEGATAFVS…QALINAQAAA (234 aa)). Residues 408 to 471 (QAMVGTRQRL…PNSLRARVAD (64 aa)) enclose the TRAM domain.

This sequence belongs to the methylthiotransferase family. MiaB subfamily. As to quaternary structure, monomer. The cofactor is [4Fe-4S] cluster.

It is found in the cytoplasm. It catalyses the reaction N(6)-dimethylallyladenosine(37) in tRNA + (sulfur carrier)-SH + AH2 + 2 S-adenosyl-L-methionine = 2-methylsulfanyl-N(6)-dimethylallyladenosine(37) in tRNA + (sulfur carrier)-H + 5'-deoxyadenosine + L-methionine + A + S-adenosyl-L-homocysteine + 2 H(+). Catalyzes the methylthiolation of N6-(dimethylallyl)adenosine (i(6)A), leading to the formation of 2-methylthio-N6-(dimethylallyl)adenosine (ms(2)i(6)A) at position 37 in tRNAs that read codons beginning with uridine. The sequence is that of tRNA-2-methylthio-N(6)-dimethylallyladenosine synthase from Bordetella petrii (strain ATCC BAA-461 / DSM 12804 / CCUG 43448).